The sequence spans 157 residues: 6,7-dimethyl-8-ribityllumazine synthase (157 aa).

Residues Phe-23, 57-59 (AFE), and 81-83 (AVI) contribute to the 5-amino-6-(D-ribitylamino)uracil site. Position 86-87 (86-87 (AT)) interacts with (2S)-2-hydroxy-3-oxobutyl phosphate. His-89 acts as the Proton donor in catalysis. A 5-amino-6-(D-ribitylamino)uracil-binding site is contributed by Phe-114. Arg-128 serves as a coordination point for (2S)-2-hydroxy-3-oxobutyl phosphate.

The protein belongs to the DMRL synthase family.

It carries out the reaction (2S)-2-hydroxy-3-oxobutyl phosphate + 5-amino-6-(D-ribitylamino)uracil = 6,7-dimethyl-8-(1-D-ribityl)lumazine + phosphate + 2 H2O + H(+). The protein operates within cofactor biosynthesis; riboflavin biosynthesis; riboflavin from 2-hydroxy-3-oxobutyl phosphate and 5-amino-6-(D-ribitylamino)uracil: step 1/2. Catalyzes the formation of 6,7-dimethyl-8-ribityllumazine by condensation of 5-amino-6-(D-ribitylamino)uracil with 3,4-dihydroxy-2-butanone 4-phosphate. This is the penultimate step in the biosynthesis of riboflavin. The protein is 6,7-dimethyl-8-ribityllumazine synthase of Desulforapulum autotrophicum (strain ATCC 43914 / DSM 3382 / VKM B-1955 / HRM2) (Desulfobacterium autotrophicum).